The following is a 377-amino-acid chain: 23S rRNA (uracil(747)-C(5))-methyltransferase RlmC (377 aa).

[4Fe-4S] cluster-binding residues include C3, C11, C14, and C87. S-adenosyl-L-methionine-binding residues include Q212, F241, E262, and N307. C334 (nucleophile) is an active-site residue.

The protein belongs to the class I-like SAM-binding methyltransferase superfamily. RNA M5U methyltransferase family. RlmC subfamily.

The enzyme catalyses uridine(747) in 23S rRNA + S-adenosyl-L-methionine = 5-methyluridine(747) in 23S rRNA + S-adenosyl-L-homocysteine + H(+). Its function is as follows. Catalyzes the formation of 5-methyl-uridine at position 747 (m5U747) in 23S rRNA. This is 23S rRNA (uracil(747)-C(5))-methyltransferase RlmC from Xenorhabdus bovienii (strain SS-2004) (Xenorhabdus nematophila subsp. bovienii).